The chain runs to 570 residues: Proline--tRNA ligase (570 aa).

Positions 238–257 are disordered; that stretch reads ARPAPAEHAEPRPLEKVETP.

Belongs to the class-II aminoacyl-tRNA synthetase family. ProS type 1 subfamily. As to quaternary structure, homodimer.

Its subcellular location is the cytoplasm. The catalysed reaction is tRNA(Pro) + L-proline + ATP = L-prolyl-tRNA(Pro) + AMP + diphosphate. In terms of biological role, catalyzes the attachment of proline to tRNA(Pro) in a two-step reaction: proline is first activated by ATP to form Pro-AMP and then transferred to the acceptor end of tRNA(Pro). As ProRS can inadvertently accommodate and process non-cognate amino acids such as alanine and cysteine, to avoid such errors it has two additional distinct editing activities against alanine. One activity is designated as 'pretransfer' editing and involves the tRNA(Pro)-independent hydrolysis of activated Ala-AMP. The other activity is designated 'posttransfer' editing and involves deacylation of mischarged Ala-tRNA(Pro). The misacylated Cys-tRNA(Pro) is not edited by ProRS. This Geobacter sulfurreducens (strain ATCC 51573 / DSM 12127 / PCA) protein is Proline--tRNA ligase.